The primary structure comprises 308 residues: Probable lipid phosphate phosphatase 4 (308 aa).

Transmembrane regions (helical) follow at residues 26-46 (WLILVVLGLIDIVLNVIEPFH), 66-86 (IPMWAVPIICILVPICIFIVY), 93-113 (VYDLHHAILGIGFSCLVTGVT), 162-182 (SFPSGHTSWSFAGLTFLAWYL), 193-213 (GHVAKLCLVFLPILISILIGI), and 226-246 (VFAGAIIGIFVASFSYLHFFP). The tract at residues 274–308 (MTRTGSRGMLGNDVEPGNSASSPHDRHRESTDSDF) is disordered. The segment covering 296–308 (PHDRHRESTDSDF) has biased composition (basic and acidic residues).

This sequence belongs to the PA-phosphatase related phosphoesterase family.

The protein localises to the membrane. The protein is Probable lipid phosphate phosphatase 4 (LPP4) of Arabidopsis thaliana (Mouse-ear cress).